The sequence spans 346 residues: Haptoglobin-related protein (346 aa).

Positions 1–16 (DLGAVIYLLLWGRQLF) form a signal peptide, not cleaved. One can recognise a Sushi domain in the interval 32–85 (FPKPPEIANGYVEHLFRYQRKNYYRLRTEGDGVYTLNDKKQWINKAVGDKLPEC). In terms of domain architecture, Peptidase S1 spans 102–344 (ILGGHLDAKG…IHVWVQKTIA (243 aa)). 2 disulfide bridges follow: cysteine 249/cysteine 280 and cysteine 291/cysteine 321.

The protein belongs to the peptidase S1 family.

It localises to the secreted. In terms of biological role, primate-specific plasma protein associated with apolipoprotein L-I (apoL-I)-containing high-density lipoprotein (HDL). Binds hemoglobin with high affinity and may contribute to the clearance of cell-free hemoglobin to allow hepatic recycling of heme iron. The chain is Haptoglobin-related protein (HPR) from Pan troglodytes (Chimpanzee).